The following is a 102-amino-acid chain: Small ribosomal subunit protein bS6 (102 aa).

Belongs to the bacterial ribosomal protein bS6 family.

Binds together with bS18 to 16S ribosomal RNA. The polypeptide is Small ribosomal subunit protein bS6 (Solidesulfovibrio magneticus (strain ATCC 700980 / DSM 13731 / RS-1) (Desulfovibrio magneticus)).